We begin with the raw amino-acid sequence, 293 residues long: ADP-forming sulfoacetate-CoA ligase subunit SauD (293 aa).

Residues 17 to 20, K43, and 96 to 98 each bind CoA; these read TGKE and IAD. H251 functions as the Tele-phosphohistidine intermediate in the catalytic mechanism.

It belongs to the succinate/malate CoA ligase alpha subunit family. As to quaternary structure, forms a complex with SauC.

The catalysed reaction is sulfoacetate + ATP + CoA = sulfoacetyl-CoA + ADP + phosphate. Involved in the degradation of sulfoacetate. Catalyzes the CoA- and ATP-dependent conversion of sulfoacetate to sulfoacetyl-CoA and ADP. Cannot use other sulfonic and carboxylic acids, and shows only residual activity with 3-sulfopropanoate and malonic acid. The polypeptide is ADP-forming sulfoacetate-CoA ligase subunit SauD (Bilophila wadsworthia (strain 3_1_6)).